Consider the following 311-residue polypeptide: DNA-directed RNA polymerase subunit alpha (311 aa).

Residues 1–227 are alpha N-terminal domain (alpha-NTD); sequence MAQFQIECIE…NLFCSLRNLD (227 aa). Positions 239 to 311 are alpha C-terminal domain (alpha-CTD); it reads DKKISQVLIE…GISLPKEKSD (73 aa).

Belongs to the RNA polymerase alpha chain family. As to quaternary structure, in plastids the minimal PEP RNA polymerase catalytic core is composed of four subunits: alpha, beta, beta', and beta''. When a (nuclear-encoded) sigma factor is associated with the core the holoenzyme is formed, which can initiate transcription.

Its subcellular location is the plastid. The protein localises to the chloroplast. It catalyses the reaction RNA(n) + a ribonucleoside 5'-triphosphate = RNA(n+1) + diphosphate. Its function is as follows. DNA-dependent RNA polymerase catalyzes the transcription of DNA into RNA using the four ribonucleoside triphosphates as substrates. The chain is DNA-directed RNA polymerase subunit alpha from Pyropia yezoensis (Susabi-nori).